The sequence spans 450 residues: Glucose-6-phosphate isomerase (450 aa).

Thr39 bears the Phosphothreonine mark. The active-site Proton donor is the Glu291. Catalysis depends on residues His312 and Lys426.

The protein belongs to the GPI family.

The protein resides in the cytoplasm. The catalysed reaction is alpha-D-glucose 6-phosphate = beta-D-fructose 6-phosphate. It functions in the pathway carbohydrate biosynthesis; gluconeogenesis. Its pathway is carbohydrate degradation; glycolysis; D-glyceraldehyde 3-phosphate and glycerone phosphate from D-glucose: step 2/4. Its function is as follows. Catalyzes the reversible isomerization of glucose-6-phosphate to fructose-6-phosphate. The polypeptide is Glucose-6-phosphate isomerase (Bacillus cereus (strain ATCC 10987 / NRS 248)).